The primary structure comprises 130 residues: Large ribosomal subunit protein bL20 (130 aa).

Belongs to the bacterial ribosomal protein bL20 family.

In terms of biological role, binds directly to 23S ribosomal RNA and is necessary for the in vitro assembly process of the 50S ribosomal subunit. It is not involved in the protein synthesizing functions of that subunit. The chain is Large ribosomal subunit protein bL20 from Salinispora tropica (strain ATCC BAA-916 / DSM 44818 / JCM 13857 / NBRC 105044 / CNB-440).